Consider the following 389-residue polypeptide: Putative RNA methyltransferase R405 (389 aa).

Positions 207, 261, and 314 each coordinate S-adenosyl-L-methionine. Cys342 serves as the catalytic Nucleophile.

It belongs to the class I-like SAM-binding methyltransferase superfamily. RNA M5U methyltransferase family.

The sequence is that of Putative RNA methyltransferase R405 from Acanthamoeba polyphaga (Amoeba).